The sequence spans 120 residues: Guanidine hydrolase-activating protein A (120 aa).

His2, Glu3, and Glu41 together coordinate Ni(2+). Zn(2+) contacts are provided by Cys74, Cys77, Cys91, and Cys94.

The protein belongs to the HypA/HybF family.

Involved in the maturation of the nickel-dependent guanidine hydrolase GdmH. Required for nickel insertion into the metal center of GdmH. Seems to be required only for GdmH activation and not for activity. The polypeptide is Guanidine hydrolase-activating protein A (Synechocystis sp. (strain ATCC 27184 / PCC 6803 / Kazusa)).